A 125-amino-acid polypeptide reads, in one-letter code: Snaclec B6 (125 aa).

3 disulfides stabilise this stretch: Cys2–Cys13, Cys30–Cys119, and Cys96–Cys111. A C-type lectin domain is found at His9–Gln120. N-linked (GlcNAc...) asparagine glycosylation occurs at Asn95. Asn112 is a glycosylation site (N-linked (GlcNAc...) asparagine).

This sequence belongs to the snaclec family. In terms of assembly, heterodimer; disulfide-linked. As to expression, expressed by the venom gland.

It localises to the secreted. In terms of biological role, interferes with one step of hemostasis (modulation of platelet aggregation, or coagulation cascade, for example). This Macrovipera lebetinus (Levantine viper) protein is Snaclec B6.